A 490-amino-acid chain; its full sequence is RNA-binding post-transcriptional regulator cip1 (490 aa).

Disordered stretches follow at residues 16-63 (RGLA…GSSA), 76-97 (ASSR…YSQL), and 138-199 (HNVS…GEDT). Residues 34–62 (RLQSPLNSPKLQPIGSPQASRKTSGSGSS) show a composition bias toward polar residues. Residues Ser-37, Ser-41, Ser-49, Ser-86, and Ser-141 each carry the phosphoserine modification. Low complexity-rich tracts occupy residues 76–88 (ASSR…PSDS) and 141–160 (SPPS…ASGK). Polar residues predominate over residues 164–192 (ADTSAEPSLDAFNSTQIKAGSTANSNSTP). The region spanning 202–280 (TAIVVKNIPF…RRLRVEWKRQ (79 aa)) is the RRM domain. A phosphoserine mark is found at Ser-397, Ser-401, and Ser-427. A Phosphothreonine modification is found at Thr-431. Ser-435, Ser-456, and Ser-466 each carry phosphoserine. The segment at 457-490 (PLQKASTLSSPFNSKNDNDASTSASKQSFGVSHF) is disordered.

Interacts with csx1. In terms of processing, phosphorylated by sty1.

The protein localises to the cytoplasm. In terms of biological role, regulates global gene expression after oxidative stress. Interacts and stabilizes mRNAs and may regulate their transition between different cytoplasmic components after oxidative stress. This Schizosaccharomyces pombe (strain 972 / ATCC 24843) (Fission yeast) protein is RNA-binding post-transcriptional regulator cip1 (cip1).